Reading from the N-terminus, the 471-residue chain is Collagenase 3 (471 aa).

An N-terminal signal peptide occupies residues 1–19 (MHPGVLAAFLFLSWTHCRA). Residues 20-103 (LPLPSGGDED…PRCGVPDVGE (84 aa)) constitute a propeptide, activation peptide. The Cysteine switch motif lies at 94–101 (PRCGVPDV). Zn(2+) is bound at residue Cys-96. The N-linked (GlcNAc...) asparagine glycan is linked to Asn-117. A Ca(2+)-binding site is contributed by Asp-128. Residue Asn-152 is glycosylated (N-linked (GlcNAc...) asparagine). A Ca(2+)-binding site is contributed by Asp-162. 2 residues coordinate Zn(2+): His-172 and Asp-174. The interval 176-246 (YPFDGPSGLL…GALMFPIYTY (71 aa)) is interaction with TIMP2. Residues Asp-179, Gly-180, Ser-182, and Leu-184 each coordinate Ca(2+). A Zn(2+)-binding site is contributed by His-187. Asn-194, Gly-196, and Asp-198 together coordinate Ca(2+). Zn(2+) is bound at residue His-200. Ca(2+)-binding residues include Asp-202, Asp-203, and Glu-205. His-222 provides a ligand contact to Zn(2+). The active site involves Glu-223. His-226, His-232, and Met-240 together coordinate Zn(2+). A disordered region spans residues 263–284 (QSLYGPGDEDPNPKHPKTPDKC). The tract at residues 268-471 (PGDEDPNPKH…VMPANSILWC (204 aa)) is interaction with collagen. A compositionally biased stretch (basic and acidic residues) spans 273–284 (PNPKHPKTPDKC). Hemopexin repeat units lie at residues 281–330 (PDKC…WPEL), 331–377 (PNRI…GLPK), 379–427 (VKKI…FPGI), and 428–471 (GDKV…ILWC). A disulfide bridge connects residues Cys-284 and Cys-471. Residues Asp-291, Ile-293, Asp-335, and Ala-337 each contribute to the Ca(2+) site. Position 366 is a phosphotyrosine; by PKDCC (Tyr-366). Positions 383, 385, 432, and 434 each coordinate Ca(2+).

It belongs to the peptidase M10A family. As to quaternary structure, monomer. Interacts with TIMP1, TIMP2 and TIMP3. Binds (via the C-terminal region) to collagen. It depends on Ca(2+) as a cofactor. Requires Zn(2+) as cofactor. The proenzyme is activated by removal of the propeptide; this cleavage can be effected by other matrix metalloproteinases, such as MMP2, MMP3 and MMP14 and may involve several cleavage steps. Cleavage can also be autocatalytic, after partial maturation by another protease or after treatment with 4-aminophenylmercuric acetate (APMA) (in vitro). Post-translationally, N-glycosylated. In terms of processing, tyrosine phosphorylated by PKDCC/VLK. In terms of tissue distribution, detected in fetal cartilage and calvaria, in chondrocytes of hypertrophic cartilage in vertebrae and in the dorsal end of ribs undergoing ossification, as well as in osteoblasts and periosteal cells below the inner periosteal region of ossified ribs. Detected in chondrocytes from in joint cartilage that have been treated with TNF and IL1B, but not in untreated chondrocytes. Detected in T lymphocytes. Detected in breast carcinoma tissue.

It localises to the secreted. The protein localises to the extracellular space. It is found in the extracellular matrix. Its activity is regulated as follows. Inhibited by TIMP1, TIMP2 and TIMP3. Inhibited by acetohydroxamic acid and other zinc chelators. In terms of biological role, plays a role in the degradation of extracellular matrix proteins including fibrillar collagen, fibronectin, TNC and ACAN. Cleaves triple helical collagens, including type I, type II and type III collagen, but has the highest activity with soluble type II collagen. Can also degrade collagen type IV, type XIV and type X. May also function by activating or degrading key regulatory proteins, such as TGFB1 and CCN2. Plays a role in wound healing, tissue remodeling, cartilage degradation, bone development, bone mineralization and ossification. Required for normal embryonic bone development and ossification. Plays a role in the healing of bone fractures via endochondral ossification. Plays a role in wound healing, probably by a mechanism that involves proteolytic activation of TGFB1 and degradation of CCN2. Plays a role in keratinocyte migration during wound healing. May play a role in cell migration and in tumor cell invasion. The protein is Collagenase 3 (MMP13) of Homo sapiens (Human).